The primary structure comprises 330 residues: MKNIAIIGASGYTGAQISSLINAESTMSIQGLYVSENSLDKGKALSDLYPAYSHIDLCLTPLTDDAKQTIVATADAVVLATDHGVSLHLAAWFYQQGLAVFDLSGAYRFSDVAQYPKWYGFTHEYSQVLADAVYGLAEWNAPQIATSKMIAVPGCYPTASLIALKPVAHLLTDILPVINAVSGVTGAGRKAQLHTSFCEVSLTPYGVLGHRHQPEIATQLGQEVIFTPHLGNFKRGILATITVQLAAGTTASDIEKAYQCYDSAELITVKQNQFPKVDDVVQTANCHLGWKFDEQSGYLVIASAIDNLMKGAASQALQCIKIHFNASVNH.

C155 is a catalytic residue.

It belongs to the NAGSA dehydrogenase family. Type 1 subfamily.

The protein localises to the cytoplasm. The enzyme catalyses N-acetyl-L-glutamate 5-semialdehyde + phosphate + NADP(+) = N-acetyl-L-glutamyl 5-phosphate + NADPH + H(+). The protein operates within amino-acid biosynthesis; L-arginine biosynthesis; N(2)-acetyl-L-ornithine from L-glutamate: step 3/4. Functionally, catalyzes the NADPH-dependent reduction of N-acetyl-5-glutamyl phosphate to yield N-acetyl-L-glutamate 5-semialdehyde. The chain is N-acetyl-gamma-glutamyl-phosphate reductase from Shewanella halifaxensis (strain HAW-EB4).